The chain runs to 256 residues: Stanniocalcin (256 aa).

The first 18 residues, Met1 to Ala18, serve as a signal peptide directing secretion. The propeptide occupies Thr19–Arg33. N-linked (GlcNAc...) asparagine glycosylation occurs at Asn62.

This sequence belongs to the stanniocalcin family. As to quaternary structure, homodimer; disulfide-linked. Produced and secreted by the corpuscles of Stannius.

Its subcellular location is the secreted. Its function is as follows. Its primary function is the prevention of hypercalcemia. Upon release into the circulation, it lowers calcium transport by the gills, thereby reducing its rate of influx from the environment into the extracellular compartment. STC also stimulates phosphate reabsorption by renal proximal tubules. The consequence of this action is increased levels of plasma phosphate, which combines with excess calcium and promotes its disposal into bone and scales. The protein is Stanniocalcin (stc) of Oncorhynchus kisutch (Coho salmon).